The chain runs to 2618 residues: Mediator of RNA polymerase II transcription subunit 13 (2618 aa).

Composition is skewed to low complexity over residues 232–255 (FAAA…VPNP), 509–519 (TPASGTGSLSA), and 532–543 (DSKQLVQQQIQQ). 10 disordered regions span residues 232 to 279 (FAAA…AAPP), 509 to 543 (TPAS…QIQQ), 569 to 731 (GNTP…SGGP), 916 to 957 (LNIK…AEGL), 970 to 995 (TSSN…NGGC), 1036 to 1055 (TKMF…SSPC), 1268 to 1384 (PRTP…TGVV), 1521 to 1557 (ASAS…ITGY), 1614 to 1633 (SRKN…LDKI), and 1985 to 2060 (KTLL…GETK). Residues Thr571 and Thr575 each carry the phosphothreonine modification. Composition is skewed to polar residues over residues 581–590 (STYSRNSLGG), 634–643 (APTSVSNLQQ), and 669–681 (SITA…QTPS). Over residues 692-706 (AGGGPAGGQGLGTGP) the composition is skewed to gly residues. The span at 711-723 (AQQPATPTAATSA) shows a compositional bias: low complexity. Residues 939–949 (NSSGGGSGSGG) show a composition bias toward gly residues. Residues 1272–1295 (LTPSTVPQPLSSGGSQYLLNQLNC) show a composition bias toward polar residues. Gly residues-rich tracts occupy residues 1375-1384 (GLGGGATGVV) and 1528-1538 (AGSGHGHGPNG). Low complexity predominate over residues 1539-1553 (GSNSSSCTPPSSNPH). Residues 1614–1629 (SRKNQNKQGPGETSSA) are compositionally biased toward polar residues. The span at 1993-2014 (GSGNSHSKGGSSCSSNSSSVSG) shows a compositional bias: low complexity. Phosphoserine occurs at positions 2472 and 2475.

It belongs to the Mediator complex subunit 13 family. As to quaternary structure, component of the Cdk8 module of the Mediator complex, composed of CycC, Cdk8, kto and skd.

It localises to the nucleus. In terms of biological role, component of the Mediator complex, a coactivator involved in the regulated transcription of nearly all RNA polymerase II-dependent genes. Mediator functions as a bridge to convey information from gene-specific regulatory proteins to the basal RNA polymerase II transcription machinery. Mediator is recruited to promoters by direct interactions with regulatory proteins and serves as a scaffold for the assembly of a functional preinitiation complex with RNA polymerase II and the general transcription factors. Required for leg and eye development and macrochaete specification or differentiation. Negatively regulates sex comb development. Required for activated transcription of the MtnB and MtnD genes. The polypeptide is Mediator of RNA polymerase II transcription subunit 13 (skd) (Drosophila melanogaster (Fruit fly)).